The chain runs to 45 residues: Alpha-conotoxin-like Lp1.10 (45 aa).

The propeptide occupies 1–27; sequence VVLGPASDGRNAAANVKAPDLIALTVR. Disulfide bonds link C30/C36 and C31/C44. Positions 32-34 are lacks the Ser-Xaa-Pro motif that is crucial for potent interaction with nAChR; that stretch reads HNA. The residue at position 44 (C44) is a Cysteine amide.

Belongs to the conotoxin A superfamily. As to expression, expressed by the venom duct.

Its subcellular location is the secreted. Functionally, alpha-conotoxins act on postsynaptic membranes, they bind to the nicotinic acetylcholine receptors (nAChR) and thus inhibit them. Has possibly a distinct nAChR binding mode from other alpha-conotoxins, due to a different three residue motif (lacks the Ser-Xaa-Pro motif). The polypeptide is Alpha-conotoxin-like Lp1.10 (Conus leopardus (Leopard cone)).